Here is a 244-residue protein sequence, read N- to C-terminus: tRNA pseudouridine synthase B (244 aa).

Asp-46 serves as the catalytic Nucleophile.

This sequence belongs to the pseudouridine synthase TruB family. Type 1 subfamily.

The enzyme catalyses uridine(55) in tRNA = pseudouridine(55) in tRNA. In terms of biological role, responsible for synthesis of pseudouridine from uracil-55 in the psi GC loop of transfer RNAs. The protein is tRNA pseudouridine synthase B of Bordetella bronchiseptica (strain ATCC BAA-588 / NCTC 13252 / RB50) (Alcaligenes bronchisepticus).